A 356-amino-acid polypeptide reads, in one-letter code: Alanine racemase, catabolic (356 aa).

The Proton acceptor; specific for D-alanine role is filled by Lys35. The residue at position 35 (Lys35) is an N6-(pyridoxal phosphate)lysine. Arg130 provides a ligand contact to substrate. Tyr253 acts as the Proton acceptor; specific for L-alanine in catalysis. Met301 provides a ligand contact to substrate.

Belongs to the alanine racemase family. The cofactor is pyridoxal 5'-phosphate.

It carries out the reaction L-alanine = D-alanine. Isomerizes L-alanine to D-alanine which is then oxidized to pyruvate by DadA. The protein is Alanine racemase, catabolic (dadB) of Klebsiella aerogenes (Enterobacter aerogenes).